The chain runs to 269 residues: Protein TIFY 11B (269 aa).

Residues 100–135 (PESGNSQLTIFFGGKVMVFNEFPEDKAKEIMEVAKE) enclose the Tify domain. The segment at 160–181 (PDLNEPTSSGNNEDQETGQQHQ) is disordered. Residues 164–181 (EPTSSGNNEDQETGQQHQ) are compositionally biased toward polar residues. Positions 186–210 (IARRASLHRFFAKRKDRAVARAPYQ) match the Jas motif. The short motif at 187 to 194 (ARRASLHR) is the Nuclear localization signal element. The tract at residues 209–269 (YQVNQHGSHL…QSSKNLELKL (61 aa)) is disordered. Residues 250 to 269 (MPMEVDKKEGQSSKNLELKL) are compositionally biased toward basic and acidic residues.

It belongs to the TIFY/JAZ family. As to quaternary structure, homo- and heterodimer. Interacts with MYC2, AFPH2/NINJA, TIFY10A/JAZ1, TIFY10B/JAZ2, TIFY11A/JAZ5, TIFY5A/JAZ8, TIFY9/JAZ10 and TIFY3B/JAZ12. (Microbial infection) Interacts with the pathogenic Pseudomonas syringae HopZ1a protein. Post-translationally, (Microbial infection) Acetylated by Pseudomonas syringae HopZ1a. In terms of processing, ubiquitinated. Targeted for degradation by the SCF(COI1) E3 ubiquitin ligase-proteasome pathway during jasmonate signaling.

The protein resides in the nucleus. Its subcellular location is the cell membrane. Repressor of jasmonate responses. The chain is Protein TIFY 11B from Arabidopsis thaliana (Mouse-ear cress).